The sequence spans 240 residues: Large ribosomal subunit protein bL25 (240 aa).

Disordered stretches follow at residues 1–20 and 204–240; these read MAEN…GPAR and GAAP…KAKK. A compositionally biased stretch (low complexity) spans 204 to 229; that stretch reads GAAPAAGAAAPAGGAAPAAGAAPAKG. Residues 230–240 show a composition bias toward basic and acidic residues; sequence GEAKGGDKAKK.

The protein belongs to the bacterial ribosomal protein bL25 family. CTC subfamily. In terms of assembly, part of the 50S ribosomal subunit; part of the 5S rRNA/L5/L18/L25 subcomplex. Contacts the 5S rRNA. Binds to the 5S rRNA independently of L5 and L18.

Functionally, this is one of the proteins that binds to the 5S RNA in the ribosome where it forms part of the central protuberance. The polypeptide is Large ribosomal subunit protein bL25 (Anaeromyxobacter sp. (strain K)).